Here is a 130-residue protein sequence, read N- to C-terminus: Fumarate reductase subunit C (130 aa).

The next 3 membrane-spanning stretches (helical) occupy residues 37–57, 60–80, and 109–129; these read VWFS…PAGW, FVGF…LLAA, and VIKA…AVAL.

Belongs to the FrdC family. As to quaternary structure, part of an enzyme complex containing four subunits: a flavoprotein (FrdA), an iron-sulfur protein (FrdB), and two hydrophobic anchor proteins (FrdC and FrdD).

The protein localises to the cell inner membrane. Two distinct, membrane-bound, FAD-containing enzymes are responsible for the catalysis of fumarate and succinate interconversion; fumarate reductase is used in anaerobic growth, and succinate dehydrogenase is used in aerobic growth. Anchors the catalytic components of the fumarate reductase complex to the cell inner membrane, binds quinones. The protein is Fumarate reductase subunit C of Yersinia enterocolitica serotype O:8 / biotype 1B (strain NCTC 13174 / 8081).